The following is a 78-amino-acid chain: Acyl carrier protein (78 aa).

The Carrier domain occupies 1 to 76 (MAIHPKVKDI…DVASYLEKKG (76 aa)). Serine 36 carries the O-(pantetheine 4'-phosphoryl)serine modification.

Belongs to the acyl carrier protein (ACP) family. In terms of processing, 4'-phosphopantetheine is transferred from CoA to a specific serine of apo-ACP by AcpS. This modification is essential for activity because fatty acids are bound in thioester linkage to the sulfhydryl of the prosthetic group.

Its subcellular location is the cytoplasm. Its pathway is lipid metabolism; fatty acid biosynthesis. Its function is as follows. Carrier of the growing fatty acid chain in fatty acid biosynthesis. The protein is Acyl carrier protein of Bdellovibrio bacteriovorus (strain ATCC 15356 / DSM 50701 / NCIMB 9529 / HD100).